The chain runs to 103 residues: Large ribosomal subunit protein bL21 (103 aa).

This sequence belongs to the bacterial ribosomal protein bL21 family. Part of the 50S ribosomal subunit. Contacts protein L20.

This protein binds to 23S rRNA in the presence of protein L20. This is Large ribosomal subunit protein bL21 from Acidithiobacillus ferrooxidans (strain ATCC 23270 / DSM 14882 / CIP 104768 / NCIMB 8455) (Ferrobacillus ferrooxidans (strain ATCC 23270)).